We begin with the raw amino-acid sequence, 140 residues long: uncharacterized protein (140 aa).

This is an uncharacterized protein from Xylella fastidiosa (strain 9a5c).